The sequence spans 383 residues: MCPSFHTTASVTTASNQADSDFNLAKLITAPAQLLAHNTMRLSCQAMQLITLEQEAQVEPAIAKLKEGDAPLFVLSGGSNVILPKQLQAQVLHPVFKGIEVLAEDEHSVSLEVMGGENWHELVLYTVNNGWYGLENLALIPGLVGASPVQNIGAYGVQLEDCLTHIKAFHLPTQKWHDFDKADCQFNYRDSLFKQQAGQWLITRVGFKLHKDATQVNADYGDVACLALSLAQADNRSAIGPIDVMHAIIDIRQSKLPDPAVLPNCGSFFKNPIIGTEQFAQLQHEYPGIVGYRVDEAHTKVAAGWLIDTAGLKGQGINPILTHAKQALVLVNHSALDSTTPASQADILATQQFIQRSIKDKFGIELEREPVWVDEQASYTAAP.

Positions 42-212 (LSCQAMQLIT…TRVGFKLHKD (171 aa)) constitute an FAD-binding PCMH-type domain. The active site involves Arg189. Ser267 functions as the Proton donor in the catalytic mechanism. Glu369 is an active-site residue.

It belongs to the MurB family. Requires FAD as cofactor.

It is found in the cytoplasm. It carries out the reaction UDP-N-acetyl-alpha-D-muramate + NADP(+) = UDP-N-acetyl-3-O-(1-carboxyvinyl)-alpha-D-glucosamine + NADPH + H(+). It functions in the pathway cell wall biogenesis; peptidoglycan biosynthesis. Cell wall formation. This chain is UDP-N-acetylenolpyruvoylglucosamine reductase, found in Psychrobacter sp. (strain PRwf-1).